Reading from the N-terminus, the 284-residue chain is NAD kinase (284 aa).

Aspartate 70 acts as the Proton acceptor in catalysis. NAD(+)-binding positions include 70 to 71, 139 to 140, lysine 167, aspartate 169, leucine 177, 180 to 185, and glutamine 236; these read DG, NE, and TAYNLS.

It belongs to the NAD kinase family. A divalent metal cation is required as a cofactor.

Its subcellular location is the cytoplasm. The enzyme catalyses NAD(+) + ATP = ADP + NADP(+) + H(+). In terms of biological role, involved in the regulation of the intracellular balance of NAD and NADP, and is a key enzyme in the biosynthesis of NADP. Catalyzes specifically the phosphorylation on 2'-hydroxyl of the adenosine moiety of NAD to yield NADP. This Helicobacter pylori (strain Shi470) protein is NAD kinase.